A 289-amino-acid polypeptide reads, in one-letter code: ATP synthase subunit gamma, mitochondrial (289 aa).

Belongs to the ATPase gamma chain family. F-type ATPases have 2 components, CF(1) - the catalytic core - and CF(0) - the membrane proton channel. CF(1) has five subunits: alpha(3), beta(3), gamma(1), delta(1), epsilon(1). CF(0) has three main subunits: a, b and c.

The protein resides in the mitochondrion. Its subcellular location is the mitochondrion inner membrane. Its function is as follows. Mitochondrial membrane ATP synthase (F(1)F(0) ATP synthase or Complex V) produces ATP from ADP in the presence of a proton gradient across the membrane which is generated by electron transport complexes of the respiratory chain. F-type ATPases consist of two structural domains, F(1) - containing the extramembraneous catalytic core, and F(0) - containing the membrane proton channel, linked together by a central stalk and a peripheral stalk. During catalysis, ATP synthesis in the catalytic domain of F(1) is coupled via a rotary mechanism of the central stalk subunits to proton translocation. Part of the complex F(1) domain and the central stalk which is part of the complex rotary element. The gamma subunit protrudes into the catalytic domain formed of alpha(3)beta(3). Rotation of the central stalk against the surrounding alpha(3)beta(3) subunits leads to hydrolysis of ATP in three separate catalytic sites on the beta subunits. The sequence is that of ATP synthase subunit gamma, mitochondrial (ATP3) from Kluyveromyces lactis (strain ATCC 8585 / CBS 2359 / DSM 70799 / NBRC 1267 / NRRL Y-1140 / WM37) (Yeast).